A 156-amino-acid polypeptide reads, in one-letter code: Small ribosomal subunit protein uS7 (156 aa).

It belongs to the universal ribosomal protein uS7 family. Part of the 30S ribosomal subunit. Contacts proteins S9 and S11.

Functionally, one of the primary rRNA binding proteins, it binds directly to 16S rRNA where it nucleates assembly of the head domain of the 30S subunit. Is located at the subunit interface close to the decoding center, probably blocks exit of the E-site tRNA. The chain is Small ribosomal subunit protein uS7 from Lacticaseibacillus casei (strain BL23) (Lactobacillus casei).